Reading from the N-terminus, the 310-residue chain is Tyrosine recombinase XerC (310 aa).

Positions 11–97 (NSLQKPLERF…SLRSFFDFLI (87 aa)) constitute a Core-binding (CB) domain. Residues 118–298 (PLPKNLDVDE…DFQHLAQAYD (181 aa)) form the Tyr recombinase domain. Residues Arg-157, Lys-181, His-250, Arg-253, and His-276 contribute to the active site. The active-site O-(3'-phospho-DNA)-tyrosine intermediate is the Tyr-285.

It belongs to the 'phage' integrase family. XerC subfamily. Forms a cyclic heterotetrameric complex composed of two molecules of XerC and two molecules of XerD.

It localises to the cytoplasm. In terms of biological role, site-specific tyrosine recombinase, which acts by catalyzing the cutting and rejoining of the recombining DNA molecules. The XerC-XerD complex is essential to convert dimers of the bacterial chromosome into monomers to permit their segregation at cell division. It also contributes to the segregational stability of plasmids. This Vibrio parahaemolyticus serotype O3:K6 (strain RIMD 2210633) protein is Tyrosine recombinase XerC.